A 66-amino-acid polypeptide reads, in one-letter code: Beta-toxin Cbo2 (66 aa).

The LCN-type CS-alpha/beta domain maps to 1–66 (KEGYIVNYHD…VWPLPKKTCN (66 aa)). Intrachain disulfides connect cysteine 12–cysteine 65, cysteine 16–cysteine 41, cysteine 25–cysteine 46, and cysteine 29–cysteine 48. Position 66 is an asparagine amide (asparagine 66).

Belongs to the long (4 C-C) scorpion toxin superfamily. Sodium channel inhibitor family. Beta subfamily. As to expression, expressed by the venom gland.

Its subcellular location is the secreted. Beta toxins bind voltage-independently at site-4 of sodium channels and shift the voltage of activation toward more negative potentials thereby affecting sodium channel activation and promoting spontaneous and repetitive firing. A mixture of Cbo2 and Cbo3 is weakly active on the human voltage-gated sodium channels Nav1.4/SCN4A and Nav1.6/SCN8A when tested at 200 nM. In vivo, is toxic to mice when intraperitoneally injected. The polypeptide is Beta-toxin Cbo2 (Centruroides bonito (Scorpion)).